The chain runs to 193 residues: Glycerol-3-phosphate acyltransferase (193 aa).

The next 5 membrane-spanning stretches (helical) occupy residues A2–V22, Q51–A71, G78–F98, V112–V132, and I154–W174.

It belongs to the PlsY family. Probably interacts with PlsX.

It is found in the cell inner membrane. It catalyses the reaction an acyl phosphate + sn-glycerol 3-phosphate = a 1-acyl-sn-glycero-3-phosphate + phosphate. It functions in the pathway lipid metabolism; phospholipid metabolism. In terms of biological role, catalyzes the transfer of an acyl group from acyl-phosphate (acyl-PO(4)) to glycerol-3-phosphate (G3P) to form lysophosphatidic acid (LPA). This enzyme utilizes acyl-phosphate as fatty acyl donor, but not acyl-CoA or acyl-ACP. This chain is Glycerol-3-phosphate acyltransferase, found in Coxiella burnetii (strain CbuK_Q154) (Coxiella burnetii (strain Q154)).